Reading from the N-terminus, the 561-residue chain is Melanopsin-A (561 aa).

At 1-34 (MRPSTDTMEADTAATHRNFITKVDVPDHAHYTVA) the chain is on the extracellular side. Residues 35–55 (FFVSVIGTLGVTGNALVQFAF) form a helical membrane-spanning segment. The Cytoplasmic segment spans residues 56-68 (YSNKKLRNLPNYF). A helical membrane pass occupies residues 69 to 89 (IMNQAASDFLMAFTQSPFFFI). At 90 to 104 (NCLNREWIFGELGCK) the chain is on the extracellular side. C103 and C181 are joined by a disulfide. The chain crosses the membrane as a helical span at residues 105-125 (LYAFLGALFGITSMINLLAIS). Residues 126-148 (LDRYMVITRPLEAMKWNSKRRTT) are Cytoplasmic-facing. A helical membrane pass occupies residues 149–169 (IAILLVWLYSLAWSLAPLVGW). Residues 170–201 (SSYIPEGLRTSCTWDYVTYTASNRSYTMMLCC) are Extracellular-facing. An N-linked (GlcNAc...) asparagine glycan is attached at N192. Residues 202–222 (FVFFIPLAIISYCYLFMFLAI) traverse the membrane as a helical segment. Over 223–255 (RKTSRDVERLGIQVRKSTIIRQKSIRTEWKLAK) the chain is Cytoplasmic. A helical transmembrane segment spans residues 256–276 (IAFVVIVVYVLSWSPYACVTM). Residues 277–291 (ISWSGHANILSPYSK) lie on the Extracellular side of the membrane. Residues 292–312 (TVPAVIAKASTIYNPFIYAII) form a helical membrane-spanning segment. K299 is modified (N6-(retinylidene)lysine). The Cytoplasmic segment spans residues 313–561 (HQKYRKTLAD…EDSLEDNDVV (249 aa)). Disordered regions lie at residues 359–385 (AIRR…SYSS), 404–448 (ASFR…SATH), 479–503 (NGLS…SKSA), and 539–561 (SFTD…NDVV). The span at 371–385 (ASASKTAAGASSYSS) shows a compositional bias: low complexity. Residues 550–561 (VDEDSLEDNDVV) show a composition bias toward acidic residues.

This sequence belongs to the G-protein coupled receptor 1 family. Opsin subfamily. Expressed in retina and brain. Expressed in a subset of retinal horizontal cells as well as a small number of amacrine and retinal ganglion cells. Also expressed in a small population of neurons in the suprachiasmatic nucleus (SNC).

The protein resides in the cell membrane. Its function is as follows. Photoreceptor implicated in non-image-forming responses to light. This chain is Melanopsin-A (opn4a), found in Gadus morhua (Atlantic cod).